We begin with the raw amino-acid sequence, 401 residues long: Argininosuccinate synthase (401 aa).

ATP-binding positions include 9-17 and A35; that span reads AFSGGLDTS. Residues Y88 and S93 each coordinate L-citrulline. G117 is an ATP binding site. T119, N123, and D124 together coordinate L-aspartate. N123 contributes to the L-citrulline binding site. R127 and Y273 together coordinate L-citrulline.

This sequence belongs to the argininosuccinate synthase family. Type 1 subfamily. In terms of assembly, homotetramer.

It is found in the cytoplasm. The catalysed reaction is L-citrulline + L-aspartate + ATP = 2-(N(omega)-L-arginino)succinate + AMP + diphosphate + H(+). Its pathway is amino-acid biosynthesis; L-arginine biosynthesis; L-arginine from L-ornithine and carbamoyl phosphate: step 2/3. This is Argininosuccinate synthase from Xylella fastidiosa (strain Temecula1 / ATCC 700964).